The chain runs to 516 residues: Flavonoid-6-hydroxylase (516 aa).

A helical transmembrane segment spans residues 3-23 (FNAAVCAALAFISLLSYYLIW). Cys455 is a binding site for heme.

This sequence belongs to the cytochrome P450 family. The cofactor is heme.

It is found in the membrane. The catalysed reaction is genkwanin + reduced [NADPH--hemoprotein reductase] + O2 = scutellarein 7-methyl ether + oxidized [NADPH--hemoprotein reductase] + H2O. The enzyme catalyses (2S)-sakuranetin + reduced [NADPH--hemoprotein reductase] + O2 = (2S)-7-methylcarthamidin + oxidized [NADPH--hemoprotein reductase] + H2O + H(+). It carries out the reaction apigenin 4',7-dimethyl ether + reduced [NADPH--hemoprotein reductase] + O2 = ladanein + oxidized [NADPH--hemoprotein reductase] + H2O + H(+). It catalyses the reaction (2S)-naringenin 4',7-dimethyl ether + reduced [NADPH--hemoprotein reductase] + O2 = (2S)-carthamidin-4',7-dimethyl ether + oxidized [NADPH--hemoprotein reductase] + H2O + H(+). It functions in the pathway flavonoid metabolism. Its function is as follows. 6-OH hydroxylase involved in the biosynthesis of polymethoxylated flavonoids natural products such as pebrellin, aroma compounds which contribute to the flavor of peppermint, and exhibit pharmacological activities such as anti-allergic, anti-oxidant, antibacterial, anti-proliferative, and anti-inflammatory effects. Catalyzes the 6-hydroxylation of 7-O-methylated precursors such as the conversion of genkwanin (GENK) to scutellarein-7-methyl ether (SCU7Me). Can also use apigenin-7,4'-dimethyl ether (AdM), naringenin-7-methyl ether (SAK) and naringenin-7,4'-dimethyl ether (NdM) as substrates. This is Flavonoid-6-hydroxylase from Mentha piperita (Peppermint).